Consider the following 395-residue polypeptide: Putative nickel insertion protein (395 aa).

Belongs to the LarC family.

This Archaeoglobus fulgidus (strain ATCC 49558 / DSM 4304 / JCM 9628 / NBRC 100126 / VC-16) protein is Putative nickel insertion protein.